The sequence spans 1040 residues: Multidrug resistance protein MdtB (1040 aa).

A run of 12 helical transmembrane segments spans residues 16–36, 347–367, 369–389, 396–416, 440–460, 472–492, 537–557, 863–883, 888–908, 911–931, 968–988, and 998–1018; these read FIMR…AGII, LMMA…NIPA, IIPG…MVFL, LTLM…IVVI, IGFT…PLLF, FAIT…TLTP, WLTL…WVFI, LGST…VLGI, FIHP…ALLA, IAGS…IGIV, ILMT…STGV, and IGMV…TPVI.

This sequence belongs to the resistance-nodulation-cell division (RND) (TC 2.A.6) family. MdtB subfamily. In terms of assembly, part of a tripartite efflux system composed of MdtA, MdtB and MdtC. MdtB forms a heteromultimer with MdtC.

The protein localises to the cell inner membrane. In terms of biological role, the MdtABC tripartite complex confers resistance against novobiocin and deoxycholate. This is Multidrug resistance protein MdtB from Escherichia coli (strain SE11).